The primary structure comprises 890 residues: Inter-alpha-trypsin inhibitor heavy chain H3 (890 aa).

A signal peptide spans 1–20; the sequence is MAFAWWPCLILALLSSLAAS. A propeptide spanning residues 21–34 is cleaved from the precursor; that stretch reads GFPRSPFRLLGKRS. One can recognise a VIT domain in the interval 29 to 158; it reads LLGKRSLPEG…KVTFELTYEE (130 aa). A glycan (N-linked (GlcNAc...) asparagine) is linked at Asn-91. The region spanning 284–467 is the VWFA domain; it reads NVAFVIDISG…LQLQGFYEEV (184 aa). Asn-580 is a glycosylation site (N-linked (GlcNAc...) asparagine). At Asp-651 the chain carries Aspartate 1-(chondroitin 4-sulfate)-ester. Positions 652–890 are excised as a propeptide; it reads PHFIIQIPEK…HTDYIVPNLF (239 aa).

The protein belongs to the ITIH family. As to quaternary structure, I-alpha-I plasma protease inhibitors are assembled from one or two heavy chains (HC) and one light chain, bikunin. Pre-alpha-inhibitor (P-alpha-I) is composed of ITIH3/HC3 and bikunin. Heavy chains are linked to bikunin via chondroitin 4-sulfate esterified to the alpha-carboxyl of the C-terminal aspartate after propeptide cleavage.

It is found in the secreted. May act as a carrier of hyaluronan in serum or as a binding protein between hyaluronan and other matrix protein, including those on cell surfaces in tissues to regulate the localization, synthesis and degradation of hyaluronan which are essential to cells undergoing biological processes. This is Inter-alpha-trypsin inhibitor heavy chain H3 (ITIH3) from Homo sapiens (Human).